The primary structure comprises 89 residues: Acylphosphatase (89 aa).

One can recognise an Acylphosphatase-like domain in the interval 3–89 (RFTARVAGLV…QSDLTDFRRK (87 aa)). Active-site residues include Arg18 and Asn36.

Belongs to the acylphosphatase family.

The catalysed reaction is an acyl phosphate + H2O = a carboxylate + phosphate + H(+). The polypeptide is Acylphosphatase (acyP) (Frankia casuarinae (strain DSM 45818 / CECT 9043 / HFP020203 / CcI3)).